The sequence spans 152 residues: Large ribosomal subunit protein bL9 (152 aa).

It belongs to the bacterial ribosomal protein bL9 family.

In terms of biological role, binds to the 23S rRNA. This Thermosynechococcus vestitus (strain NIES-2133 / IAM M-273 / BP-1) protein is Large ribosomal subunit protein bL9.